The sequence spans 650 residues: Pentatricopeptide repeat-containing protein At1g51965, mitochondrial (650 aa).

The transit peptide at 1-23 (MKLLRRRFFNSVNTITRPNRRHY) directs the protein to the mitochondrion. 14 PPR repeats span residues 132–169 (DPFLYNRIILILSRSNLPDRFDRVRSILDSMVKSNVHG), 170–200 (NISTVNILIGFFGNTEDLQMCLRLVKKWDLK), 202–236 (NSFTYKCLLQAYLRSRDYSKAFDVYCEIRRGGHKL), 237–267 (DIFAYNMLLDALAKDEKACQVFEDMKKRHCR), 269–303 (DEYTYTIMIRTMGRIGKCDEAVGLFNEMITEGLTL), 304–338 (NVVGYNTLMQVLAKGKMVDKAIQVFSRMVETGCRP), 339–369 (NEYTYSLLLNLLVAEGQLVRLDGVVEISKRY), 371–405 (TQGIYSYLVRTLSKLGHVSEAHRLFCDMWSFPVKG), 406–440 (ERDSYMSMLESLCGAGKTIEAIEMLSKIHEKGVVT), 441–475 (DTMMYNTVFSALGKLKQISHIHDLFEKMKKDGPSP), 476–510 (DIFTYNILIASFGRVGEVDEAINIFEELERSDCKP), 511–545 (DIISYNSLINCLGKNGDVDEAHVRFKEMQEKGLNP), 546–580 (DVVTYSTLMECFGKTERVEMAYSLFEEMLVKGCQP), and 581–615 (NIVTYNILLDCLEKNGRTAEAVDLYSKMKQQGLTP).

It belongs to the PPR family. P subfamily.

The protein resides in the mitochondrion. The chain is Pentatricopeptide repeat-containing protein At1g51965, mitochondrial from Arabidopsis thaliana (Mouse-ear cress).